Consider the following 264-residue polypeptide: Apolipoprotein A-I (264 aa).

Positions Met1–Ala18 are cleaved as a signal peptide. Repeat copies occupy residues Leu67–Ala88 and Pro89–Thr110. The segment at Leu67–Ala264 is 10 X approximate tandem repeats. A 3; half-length repeat occupies Lys111–Arg121. Repeat copies occupy residues Pro122–Thr143, Pro144–Thr165, Pro166–Ala187, Pro188–Ile209, and Pro210–Thr231. The 9; half-length repeat unit spans residues Pro232–Thr242. The stretch at Pro243–Ala264 is repeat 10.

This sequence belongs to the apolipoprotein A1/A4/E family. In terms of assembly, homodimer. Major protein of plasma HDL, also found in chylomicrons.

Its subcellular location is the secreted. Participates in the reverse transport of cholesterol from tissues to the liver for excretion by promoting cholesterol efflux from tissues and by acting as a cofactor for the lecithin cholesterol acyltransferase (LCAT). This chain is Apolipoprotein A-I (APOA1), found in Gallus gallus (Chicken).